Consider the following 804-residue polypeptide: Leucine--tRNA ligase (804 aa).

A 'HIGH' region motif is present at residues 40-51 (PYPSGAGLHVGH). Positions 576 to 580 (KMSKS) match the 'KMSKS' region motif. K579 contacts ATP.

The protein belongs to the class-I aminoacyl-tRNA synthetase family.

It is found in the cytoplasm. The enzyme catalyses tRNA(Leu) + L-leucine + ATP = L-leucyl-tRNA(Leu) + AMP + diphosphate. This is Leucine--tRNA ligase from Bacillus pumilus (strain SAFR-032).